The primary structure comprises 156 residues: Small ribosomal subunit protein uS7c (156 aa).

The protein belongs to the universal ribosomal protein uS7 family. As to quaternary structure, part of the 30S ribosomal subunit.

Its subcellular location is the plastid. It is found in the chloroplast. In terms of biological role, one of the primary rRNA binding proteins, it binds directly to 16S rRNA where it nucleates assembly of the head domain of the 30S subunit. The protein is Small ribosomal subunit protein uS7c (rps7) of Rhodomonas salina (Cryptomonas salina).